A 45-amino-acid chain; its full sequence is Large ribosomal subunit protein bL34 (45 aa).

Belongs to the bacterial ribosomal protein bL34 family.

The protein is Large ribosomal subunit protein bL34 of Clavibacter michiganensis subsp. michiganensis (strain NCPPB 382).